The sequence spans 800 residues: DEP domain-containing protein 1A (800 aa).

The DEP domain maps to 24-108; it reads FRAGMPLKKH…DNSQLYRFPS (85 aa). 3 disordered regions span residues 147–173, 306–326, and 459–485; these read ETLE…RSRE, SQPG…AKNP, and INTS…ARAR. The region spanning 281-321 is the Rho-GAP domain; that stretch reads PLLTYQYYELFVNILVMCGYITTPKSQPGKRKNQEEPNCPQ. Positions 459–468 are enriched in low complexity; it reads INTSGSSVSS.

This Danio rerio (Zebrafish) protein is DEP domain-containing protein 1A (depdc1a).